The following is a 289-amino-acid chain: Serine/threonine-protein phosphatase Pgam5, mitochondrial (289 aa).

A helical transmembrane segment spans residues 7 to 23 (FVCGTGAGLAVYYLQRL).

The protein belongs to the phosphoglycerate mutase family. BPG-dependent PGAM subfamily. Interacts with Pk92B/ASK1.

Its subcellular location is the mitochondrion outer membrane. It catalyses the reaction O-phospho-L-seryl-[protein] + H2O = L-seryl-[protein] + phosphate. It carries out the reaction O-phospho-L-threonyl-[protein] + H2O = L-threonyl-[protein] + phosphate. Its function is as follows. Displays phosphatase activity for serine/threonine residues, and dephosphorylates and activates Pk92B kinase. Has apparently no phosphoglycerate mutase activity. The polypeptide is Serine/threonine-protein phosphatase Pgam5, mitochondrial (Drosophila erecta (Fruit fly)).